A 55-amino-acid chain; its full sequence is Large ribosomal subunit protein bL33 (55 aa).

Belongs to the bacterial ribosomal protein bL33 family.

The protein is Large ribosomal subunit protein bL33 of Methylobacterium nodulans (strain LMG 21967 / CNCM I-2342 / ORS 2060).